Reading from the N-terminus, the 237-residue chain is MMKSQKKLLIKIIVVQCLLVLCVTSQDFDFFYFVQQWPASYCDTRRSCCYPTTGKPDEDFSIHGLWPNYKDGKWPQNCDRESSLDESEFSDLISTMEKNWPSLACPSSDGLKFWSHEWLKHGTCSALNQHAYFQTALDFKTKSNLLQNLNNAGIKPRNGDYYGVESIKKAIEKGVGHTPFIECNVDSQGNHQLYQVYLCVDSSASKFIDCPIFPHGGKCGSKIEFPSFSTNDDHDEF.

Residues methionine 1 to threonine 24 constitute a propeptide that is removed on maturation. Residue glutamine 36 participates in RNA binding. Cysteines 42 and 48 form a disulfide. Residues histidine 63, phenylalanine 113, histidine 116–glutamate 117, and lysine 120–histidine 121 each bind RNA. Catalysis depends on histidine 63, which acts as the Proton donor. Intrachain disulfides connect cysteine 78/cysteine 124, cysteine 183/cysteine 219, and cysteine 199/cysteine 210. Residue glutamate 117 is part of the active site. Histidine 121 (proton acceptor) is an active-site residue.

Belongs to the RNase T2 family.

Its subcellular location is the cytoplasm. It carries out the reaction a ribonucleotidyl-ribonucleotide-RNA + H2O = a 3'-end 3'-phospho-ribonucleotide-RNA + a 5'-end dephospho-ribonucleoside-RNA + H(+). This chain is Intracellular ribonuclease LX (RNALX), found in Solanum lycopersicum (Tomato).